The following is a 1071-amino-acid chain: ATP-dependent helicase/deoxyribonuclease subunit B (1071 aa).

This sequence belongs to the helicase family. AddB/RexB type 2 subfamily. In terms of assembly, heterodimer of AddA and RexB. The cofactor is Mg(2+).

The heterodimer acts as both an ATP-dependent DNA helicase and an ATP-dependent, dual-direction single-stranded exonuclease. Recognizes the chi site generating a DNA molecule suitable for the initiation of homologous recombination. This subunit has 5' -&gt; 3' nuclease activity but not helicase activity. The chain is ATP-dependent helicase/deoxyribonuclease subunit B from Streptococcus pyogenes serotype M12 (strain MGAS9429).